We begin with the raw amino-acid sequence, 240 residues long: UDP-2,3-diacylglucosamine hydrolase (240 aa).

Positions 8, 10, 41, 78, and 113 each coordinate Mn(2+). 78–79 (NR) is a binding site for substrate. Asp-121, Ser-159, Asn-163, Lys-166, and His-194 together coordinate substrate. The Mn(2+) site is built by His-194 and His-196.

Belongs to the LpxH family. Mn(2+) is required as a cofactor.

It is found in the cell inner membrane. It carries out the reaction UDP-2-N,3-O-bis[(3R)-3-hydroxytetradecanoyl]-alpha-D-glucosamine + H2O = 2-N,3-O-bis[(3R)-3-hydroxytetradecanoyl]-alpha-D-glucosaminyl 1-phosphate + UMP + 2 H(+). It participates in glycolipid biosynthesis; lipid IV(A) biosynthesis; lipid IV(A) from (3R)-3-hydroxytetradecanoyl-[acyl-carrier-protein] and UDP-N-acetyl-alpha-D-glucosamine: step 4/6. In terms of biological role, hydrolyzes the pyrophosphate bond of UDP-2,3-diacylglucosamine to yield 2,3-diacylglucosamine 1-phosphate (lipid X) and UMP by catalyzing the attack of water at the alpha-P atom. Involved in the biosynthesis of lipid A, a phosphorylated glycolipid that anchors the lipopolysaccharide to the outer membrane of the cell. This Shewanella baltica (strain OS195) protein is UDP-2,3-diacylglucosamine hydrolase.